The sequence spans 536 residues: SNW domain-containing protein 1 (536 aa).

The segment at 1–46 (MALTSFLPAPTQLSQDQLEAEEKARSQRSRQTSLVSSRREPPPYGY) is disordered. A2 carries the N-acetylalanine modification. Residue S14 is modified to Phosphoserine. A Glycyl lysine isopeptide (Lys-Gly) (interchain with G-Cter in SUMO2) cross-link involves residue K23. Residues 59–79 (GDGGAFPEIHVAQYPLDMGRK) are interaction with PPIL1. Residues K81, K97, K115, K122, K141, K158, and K170 each participate in a glycyl lysine isopeptide (Lys-Gly) (interchain with G-Cter in SUMO2) cross-link. Positions 174-339 (AQYIRYTPSQ…KARERRAGIK (166 aa)) are SNW. A phosphoserine mark is found at S182 and S190. K193 is covalently cross-linked (Glycyl lysine isopeptide (Lys-Gly) (interchain with G-Cter in SUMO2)). The segment at 209-233 (PPRFKINKKIPRGPPSPPAPVMHSP) is disordered. 3 positions are modified to phosphoserine: S224, S232, and S234. Glycyl lysine isopeptide (Lys-Gly) (interchain with G-Cter in SUMO2) cross-links involve residues K240, K258, K286, K339, K344, K416, K441, and K452. The interval 311-386 (KMAQKEKEKH…RSKLQRNENR (76 aa)) is disordered. Composition is skewed to basic and acidic residues over residues 472–489 (FVPD…RGRE) and 503–530 (KFLE…EHEG). A disordered region spans residues 472–536 (FVPDKEFSGS…EHEGKKRRKE (65 aa)). Residues S479 and S481 each carry the phosphoserine modification. K509 participates in a covalent cross-link: Glycyl lysine isopeptide (Lys-Gly) (interchain with G-Cter in SUMO2).

The protein belongs to the SNW family. Identified in the spliceosome C complex. Associates with U4/U6-U5 tri-small nuclear ribonucleoproteins (U4/U6-U5 tri-snRNPs). Component of the minor spliceosome, which splices U12-type introns. Interacts with SKI, SMAD2,SMAD3, RBPJ, RB1, PABPN1, MAGEA1, SIRT1, FOXN3, U2AF2, PPIL1, DAXX and ATP1B4. Interacts with VDR and RXRA; preferentially associates with VDR:RXRA heterodimers. Interacts with NCOR2. Interacts with MAML1. Interacts with NOTCH1 NICD; the interaction involves multimerized NOTCH1 NICD. Forms a complex with NOTCH1 NICD and MAML1; the association is dissociated by RBPJ. Associates with positive transcription elongation factor b (P-TEFb). Component of the SNARP complex which consists at least of SNIP1, SNW1, THRAP3, BCLAF1 and PNN.

The protein localises to the nucleus. Involved in pre-mRNA splicing as component of the spliceosome. As a component of the minor spliceosome, involved in the splicing of U12-type introns in pre-mRNAs. Required in the specific splicing of CDKN1A pre-mRNA; the function probably involves the recruitment of U2AF2 to the mRNA. May recruit PPIL1 to the spliceosome. May be involved in cyclin-D1/CCND1 mRNA stability through the SNARP complex which associates with both the 3'end of the CCND1 gene and its mRNA. Involved in transcriptional regulation. Modulates TGF-beta-mediated transcription via association with SMAD proteins, MYOD1-mediated transcription via association with PABPN1, RB1-mediated transcriptional repression, and retinoid-X receptor (RXR)- and vitamin D receptor (VDR)-dependent gene transcription in a cell line-specific manner probably involving coactivators NCOA1 and GRIP1. Is involved in NOTCH1-mediated transcriptional activation. Binds to multimerized forms of Notch intracellular domain (NICD) and is proposed to recruit transcriptional coactivators such as MAML1 to form an intermediate preactivation complex which associates with DNA-bound CBF-1/RBPJ to form a transcriptional activation complex by releasing SNW1 and redundant NOTCH1 NICD. This is SNW domain-containing protein 1 (SNW1) from Bos taurus (Bovine).